We begin with the raw amino-acid sequence, 458 residues long: Zinc finger protein 239 (458 aa).

A Glycyl lysine isopeptide (Lys-Gly) (interchain with G-Cter in SUMO2) cross-link involves residue K108. S191 carries the post-translational modification Phosphoserine. 9 C2H2-type zinc fingers span residues 207-229 (YECS…QRDH), 235-257 (YKCE…QAVH), 263-285 (YKCD…HAVH), 291-313 (YKCD…QRVH), 319-341 (YECE…QRVH), 347-369 (YKCG…RCIH), 375-397 (YQCY…LRVH), 403-425 (YHCG…QRVH), and 431-453 (YECS…QRVH).

The protein belongs to the krueppel C2H2-type zinc-finger protein family.

It is found in the nucleus. Functionally, may be involved in transcriptional regulation. This is Zinc finger protein 239 (ZNF239) from Homo sapiens (Human).